The primary structure comprises 690 residues: NF-kappa-B-repressing factor (690 aa).

The interval 1–296 (MEKILQMAEG…FKHTFGEDLV (296 aa)) is active repression domain. Positions 25-45 (KPSKGQKRHLSTCDGQNPPKK) match the Nuclear localization signal motif. Disordered regions lie at residues 27–87 (SKGQ…NEQT) and 132–163 (MYFDSGNPAPSTTSQQANSQSTPEPSPSQTFP). Residue lysine 68 forms a Glycyl lysine isopeptide (Lys-Gly) (interchain with G-Cter in SUMO2) linkage. Low complexity predominate over residues 142–163 (STTSQQANSQSTPEPSPSQTFP). A DNA-binding region spans residues 296 to 388 (VVCQIGMSSY…RVFLQDHCLA (93 aa)). Residues 414–431 (PTYPSVKSSQCHTGSSPR) show a composition bias toward polar residues. Residues 414 to 437 (PTYPSVKSSQCHTGSSPRGSGKKK) are disordered. Residue lysine 500 forms a Glycyl lysine isopeptide (Lys-Gly) (interchain with G-Cter in SUMO2) linkage. Residues 551 to 596 (EDNIGNQLLRKMGWTGGGLGKSGEGIREPISVKEQHKREGLGLDVE) enclose the G-patch domain. The R3H domain occupies 600–664 (KIAKRDIEQI…DRYLVVGRKR (65 aa)). Phosphoserine is present on serine 618. Residues lysine 666 and lysine 674 each participate in a glycyl lysine isopeptide (Lys-Gly) (interchain with G-Cter in SUMO2) cross-link.

Interacts with NF-kappa-B. Interacts with XRN2. Interacts (via G-patch domain) with DHX15; promoting the RNA helicase activity of DHX15. As to expression, widely and constitutively expressed. Expressed at lower level in colon, peripheral blood lymphocytes, lung and kidney.

The protein resides in the nucleus. Its subcellular location is the nucleolus. Enhances the ATPase activity of DHX15 by acting like a brace that tethers mobile sections of DHX15 together, stabilizing a functional conformation with high RNA affinity of DHX15. Involved in the constitutive silencing of the interferon beta promoter, independently of the virus-induced signals, and in the inhibition of the basal and cytokine-induced iNOS promoter activity. Also involved in the regulation of IL-8 transcription. May also act as a DNA-binding transcription regulator: interacts with a specific negative regulatory element (NRE) 5'-AATTCCTCTGA-3' to mediate transcriptional repression of certain NK-kappa-B responsive genes. This Homo sapiens (Human) protein is NF-kappa-B-repressing factor.